A 206-amino-acid chain; its full sequence is LexA repressor (206 aa).

Residues 27–47 (YEEIRQNLGFRSLNAVFKHLK) constitute a DNA-binding region (H-T-H motif). Catalysis depends on for autocatalytic cleavage activity residues Ser120 and Lys157.

Belongs to the peptidase S24 family. Homodimer.

The enzyme catalyses Hydrolysis of Ala-|-Gly bond in repressor LexA.. Its function is as follows. Represses a number of genes involved in the response to DNA damage (SOS response), including recA and lexA. In the presence of single-stranded DNA, RecA interacts with LexA causing an autocatalytic cleavage which disrupts the DNA-binding part of LexA, leading to derepression of the SOS regulon and eventually DNA repair. The chain is LexA repressor from Syntrophobacter fumaroxidans (strain DSM 10017 / MPOB).